We begin with the raw amino-acid sequence, 190 residues long: Somatotropin (190 aa).

The signal sequence occupies residues 1–17 (MNRVILLLSVMCVGVSS). Cystine bridges form between Cys-69–Cys-163 and Cys-180–Cys-188.

This sequence belongs to the somatotropin/prolactin family.

It localises to the secreted. Functionally, growth hormone plays an important role in growth control and is involved in the regulation of several anabolic processes. Implicated as an osmoregulatory substance important for seawater adaptation. The chain is Somatotropin (gh) from Paralichthys olivaceus (Bastard halibut).